Here is a 447-residue protein sequence, read N- to C-terminus: Glucose-6-phosphate isomerase (447 aa).

The Proton donor role is filled by E288. Active-site residues include H309 and K423.

The protein belongs to the GPI family.

It localises to the cytoplasm. The enzyme catalyses alpha-D-glucose 6-phosphate = beta-D-fructose 6-phosphate. The protein operates within carbohydrate biosynthesis; gluconeogenesis. Its pathway is carbohydrate degradation; glycolysis; D-glyceraldehyde 3-phosphate and glycerone phosphate from D-glucose: step 2/4. In terms of biological role, catalyzes the reversible isomerization of glucose-6-phosphate to fructose-6-phosphate. This Lactobacillus gasseri (strain ATCC 33323 / DSM 20243 / BCRC 14619 / CIP 102991 / JCM 1131 / KCTC 3163 / NCIMB 11718 / NCTC 13722 / AM63) protein is Glucose-6-phosphate isomerase.